The chain runs to 75 residues: MSDDMIYKEAIAAEVLQVTGRTGVTGEIFQVRCKILGGKDTGRILTRNIKGPIKVGDIIMLRETEREAKALGRRR.

The protein belongs to the eukaryotic ribosomal protein eS28 family.

The protein is Small ribosomal subunit protein eS28 of Methanococcus aeolicus (strain ATCC BAA-1280 / DSM 17508 / OCM 812 / Nankai-3).